Here is a 113-residue protein sequence, read N- to C-terminus: Holo-[acyl-carrier-protein] synthase (113 aa).

Residues Asp5 and Glu50 each coordinate Mg(2+).

The protein belongs to the P-Pant transferase superfamily. AcpS family. Mg(2+) serves as cofactor.

The protein localises to the cytoplasm. The enzyme catalyses apo-[ACP] + CoA = holo-[ACP] + adenosine 3',5'-bisphosphate + H(+). Transfers the 4'-phosphopantetheine moiety from coenzyme A to a Ser of acyl-carrier-protein. The chain is Holo-[acyl-carrier-protein] synthase from Nautilia profundicola (strain ATCC BAA-1463 / DSM 18972 / AmH).